A 75-amino-acid chain; its full sequence is Putative sulfur carrier protein YrkI (75 aa).

Cysteine 14 functions as the Cysteine persulfide intermediate in the catalytic mechanism.

It belongs to the sulfur carrier protein TusA family.

The chain is Putative sulfur carrier protein YrkI (yrkI) from Bacillus subtilis (strain 168).